Reading from the N-terminus, the 491-residue chain is Chromosomal replication initiator protein DnaA (491 aa).

A domain I, interacts with DnaA modulators region spans residues 1 to 69 (MTTWDKCLKK…TIQECHGNDL (69 aa)). The interval 69 to 154 (LIIEYSNKKF…KEDEEYSFGL (86 aa)) is domain II. Residues 155-371 (PLKEKYVFDS…GALNRVLTTS (217 aa)) are domain III, AAA+ region. ATP-binding residues include glycine 199, glycine 201, lysine 202, and threonine 203. The tract at residues 372–491 (KFNHKDPTIE…YELLLDKISR (120 aa)) is domain IV, binds dsDNA.

Belongs to the DnaA family. Oligomerizes as a right-handed, spiral filament on DNA at oriC.

It localises to the cytoplasm. Its function is as follows. Plays an essential role in the initiation and regulation of chromosomal replication. ATP-DnaA binds to the origin of replication (oriC) to initiate formation of the DNA replication initiation complex once per cell cycle. Binds the DnaA box (a 9 base pair repeat at the origin) and separates the double-stranded (ds)DNA. Forms a right-handed helical filament on oriC DNA; dsDNA binds to the exterior of the filament while single-stranded (ss)DNA is stabiized in the filament's interior. The ATP-DnaA-oriC complex binds and stabilizes one strand of the AT-rich DNA unwinding element (DUE), permitting loading of DNA polymerase. After initiation quickly degrades to an ADP-DnaA complex that is not apt for DNA replication. Binds acidic phospholipids. The polypeptide is Chromosomal replication initiator protein DnaA (Francisella tularensis subsp. holarctica (strain OSU18)).